Here is a 144-residue protein sequence, read N- to C-terminus: Superoxide dismutase [Mn], mitochondrial (144 aa).

Residues histidine 10, histidine 58, and aspartate 143 each contribute to the Mn(2+) site.

It belongs to the iron/manganese superoxide dismutase family. In terms of assembly, homotetramer. Mn(2+) is required as a cofactor.

It localises to the mitochondrion matrix. The catalysed reaction is 2 superoxide + 2 H(+) = H2O2 + O2. Functionally, destroys superoxide anion radicals which are normally produced within the cells and which are toxic to biological systems. This chain is Superoxide dismutase [Mn], mitochondrial, found in Branchiostoma floridae (Florida lancelet).